The following is a 214-amino-acid chain: RNA pyrophosphohydrolase (214 aa).

In terms of domain architecture, Nudix hydrolase spans 6–149; that stretch reads GFRPNVGIIL…KRDVYQLALT (144 aa). Positions 38–59 match the Nudix box motif; that stretch reads GGIKYGETPMQAMYRELHEETG.

This sequence belongs to the Nudix hydrolase family. RppH subfamily. A divalent metal cation is required as a cofactor.

Its function is as follows. Accelerates the degradation of transcripts by removing pyrophosphate from the 5'-end of triphosphorylated RNA, leading to a more labile monophosphorylated state that can stimulate subsequent ribonuclease cleavage. The sequence is that of RNA pyrophosphohydrolase from Burkholderia cenocepacia (strain HI2424).